The sequence spans 380 residues: Putative 8-amino-7-oxononanoate synthase (380 aa).

Arg-22 serves as a coordination point for substrate. 109–110 (GY) contacts pyridoxal 5'-phosphate. Residue His-134 coordinates substrate. Pyridoxal 5'-phosphate-binding positions include Ser-182, 207-210 (DEAH), and 238-241 (TLSK). The residue at position 241 (Lys-241) is an N6-(pyridoxal phosphate)lysine. Thr-353 provides a ligand contact to substrate.

This sequence belongs to the class-II pyridoxal-phosphate-dependent aminotransferase family. BioF subfamily. In terms of assembly, homodimer. Pyridoxal 5'-phosphate serves as cofactor.

It carries out the reaction 6-carboxyhexanoyl-[ACP] + L-alanine + H(+) = (8S)-8-amino-7-oxononanoate + holo-[ACP] + CO2. The protein operates within cofactor biosynthesis; biotin biosynthesis. In terms of biological role, catalyzes the decarboxylative condensation of pimeloyl-[acyl-carrier protein] and L-alanine to produce 8-amino-7-oxononanoate (AON), [acyl-carrier protein], and carbon dioxide. In Gloeothece citriformis (strain PCC 7424) (Cyanothece sp. (strain PCC 7424)), this protein is Putative 8-amino-7-oxononanoate synthase (bioF).